A 145-amino-acid chain; its full sequence is Aminoglycoside N(6')-acetyltransferase type 1 (145 aa).

In terms of domain architecture, N-acetyltransferase spans 1 to 145 (MDIRQMNRTH…ERVIFYRKRC (145 aa)). Residues tryptophan 22, histidine 25, tyrosine 66, and glutamate 79 each coordinate substrate. Residues 81 to 83 (IFV) and 89 to 94 (QRGVAK) contribute to the acetyl-CoA site. Substrate is bound at residue aspartate 115. Asparagine 120 is a binding site for acetyl-CoA. Residue glutamate 136 participates in substrate binding.

In terms of assembly, homodimer.

The catalysed reaction is kanamycin B + acetyl-CoA = N(6')-acetylkanamycin B + CoA + H(+). Catalyzes the transfer of an acetyl group from acetyl-CoA to the 6'-amino group of aminoglycoside molecules conferring resistance to antibiotics containing the purpurosamine ring. The polypeptide is Aminoglycoside N(6')-acetyltransferase type 1 (Salmonella typhimurium (strain LT2 / SGSC1412 / ATCC 700720)).